Reading from the N-terminus, the 294-residue chain is MKLLTTGKVKDVYDDGDTLVFKFSNRISVFDKIIPNEIDNKGESLCRTSAFWFQLIESYGMKSHFIELIDNRTMRVRKFAVPNKVSLGSSNYVIPLEFITRYYVAGSLYDRIKEGKVKPMDIGLKHVPEYGEKLIDPIFEATTKREETDRLLTKKEAMEIGGLTLEDYCEIMEAVFKIDRRIDMEVSKRGLIHADGKKEIALDRERRIVVVDTFGTADEDRFWDEKEYDNGRVVELSKEMVRQYYRSIGYHDKLYYARENGLPEPDIPALSDDMVSKVSDLYRMMFEKITGQKW.

This sequence belongs to the SAICAR synthetase family.

The enzyme catalyses 5-amino-1-(5-phospho-D-ribosyl)imidazole-4-carboxylate + L-aspartate + ATP = (2S)-2-[5-amino-1-(5-phospho-beta-D-ribosyl)imidazole-4-carboxamido]succinate + ADP + phosphate + 2 H(+). It participates in purine metabolism; IMP biosynthesis via de novo pathway; 5-amino-1-(5-phospho-D-ribosyl)imidazole-4-carboxamide from 5-amino-1-(5-phospho-D-ribosyl)imidazole-4-carboxylate: step 1/2. The polypeptide is Phosphoribosylaminoimidazole-succinocarboxamide synthase (Thermoplasma volcanium (strain ATCC 51530 / DSM 4299 / JCM 9571 / NBRC 15438 / GSS1)).